The primary structure comprises 346 residues: LRP2-binding protein (346 aa).

The stretch at 58–91 (AMAYFLRGQLYFEEGWYEEALAQFEEIQEKDHQA) is one TPR repeat. Sel1-like repeat units lie at residues 92–124 (IYQLGVMYYDGLGTVADAEKGVGYMKKILDSSC), 132–167 (FAAAYNLGRAYFEGKGVKRSDEEAERLWLYAADNGN), 172–205 (VKAQSILGLFYSMKEPKDLEKAFFWHSEACGNGN), 206–241 (LESQGALGLMYLYGQGIRQDTDAALHCLREAAERGN), 242–276 (VYAQGILVEYYYKMKFFTKCVSFSKRIADYDEVHD), and 296–331 (AMASFYYARCLQLGLGITKDEASAKHYYSKACRLNP).

Interacts with LRP2.

It localises to the cytoplasm. Functionally, may act as an adapter that regulates LRP2 function. The polypeptide is LRP2-binding protein (Lrp2bp) (Rattus norvegicus (Rat)).